A 61-amino-acid polypeptide reads, in one-letter code: Metallothionein-1 (61 aa).

The residue at position 1 (M1) is an N-acetylmethionine. The tract at residues 1-29 is beta; sequence MDPNCSCSTGGSCTCSSSCGCKNCKCTSC. 20 residues coordinate a divalent metal cation: C5, C7, C13, C15, C19, C21, C24, C26, C29, C33, C34, C36, C37, C41, C44, C48, C50, C57, C59, and C60. Residues 30-61 form an alpha region; the sequence is KKSCCSCCPVGCSKCAQGCVCKGASDKCTCCA.

Belongs to the metallothionein superfamily. Type 1 family.

Metallothioneins have a high content of cysteine residues that bind various heavy metals; these proteins are transcriptionally regulated by both heavy metals and glucocorticoids. The sequence is that of Metallothionein-1 (Mt1) from Rattus norvegicus (Rat).